Consider the following 457-residue polypeptide: MGSDRWKNIGGAPQMEDSVQDKSQRKGCGYILCTVLLSVAVLLAVTVTGAVLFMNHYHAPSTEPPPVITTNMEDPNALVTIERADSSHINIFIDPNCPDPFPRLEGLQSALLSALADHDSEQKVAGGKERALLTSLSDQVAQMVSQVARQRADWENVKKVQNGLGAEIGALKNEQGRLIKLLSEGQSHVAQLGSSVSEVLETVQRELGSGRPRVKADLQRAPSRSSRPRGCANGSKPRDCYDIYMSGQQEDGVYSVFPIHYPSGFQVFCDMTTDGGGWTVFQRREDGSVNFFQGWEQYRDGFGKLTGEHWLGLQRIHLLTMQTHYQLRIDLEDFENATAYALYNTFGVGLFSVNPEEDGYPITISDYTGTAGDSLGKHSGMKFTTKDMDNDHSENNCASFYHGAWWYRNCHTSNLNGQYLRGHHASYADGIEWSSWTGWQYSLKFTEMKIRPQREEN.

Positions 1-20 are disordered; the sequence is MGSDRWKNIGGAPQMEDSVQ. The Cytoplasmic segment spans residues 1 to 33; sequence MGSDRWKNIGGAPQMEDSVQDKSQRKGCGYILC. Residues 34–54 form a helical; Signal-anchor for type II membrane protein membrane-spanning segment; the sequence is TVLLSVAVLLAVTVTGAVLFM. The Extracellular segment spans residues 55 to 457; it reads NHYHAPSTEP…MKIRPQREEN (403 aa). Residues 211–235 are disordered; sequence RPRVKADLQRAPSRSSRPRGCANGS. In terms of domain architecture, Fibrinogen C-terminal spans 231–454; it reads CANGSKPRDC…FTEMKIRPQR (224 aa). Asn-233 carries an N-linked (GlcNAc...) asparagine glycan. A disulfide bridge links Cys-240 with Cys-269. Asn-336 is a glycosylation site (N-linked (GlcNAc...) asparagine). Positions 389 and 391 each coordinate Ca(2+). Cys-397 and Cys-410 are disulfide-bonded.

In terms of assembly, homotetramer; disulfide-linked.

Its subcellular location is the membrane. Its function is as follows. Acetyl group-binding receptor which shows a calcium-dependent binding to acetylated structures such as chitin, some N-acetylated carbohydrates, and amino acids. In Xenopus tropicalis (Western clawed frog), this protein is Fibrinogen C domain-containing protein 1 (fibcd1).